We begin with the raw amino-acid sequence, 1485 residues long: Glutamate receptor ionotropic, NMDA 2B (1485 aa).

A signal peptide spans 1–26 (MKPRAECCSPKFWLVLAVLAVSGSRA). Topologically, residues 27-557 (RSQKSPPSIG…SAFLEPFSAD (531 aa)) are extracellular. N-linked (GlcNAc...) asparagine glycosylation is present at Asn74. A disulfide bridge connects residues Cys86 and Cys321. Zn(2+)-binding residues include His127 and Glu284. N-linked (GlcNAc...) asparagine glycosylation is found at Asn341, Asn348, Asn444, and Asn491. 2 disulfide bridges follow: Cys429-Cys456 and Cys436-Cys457. Residues Thr514 and Arg519 each contribute to the L-glutamate site. Asn542 carries an N-linked (GlcNAc...) asparagine glycan. Residues 558–576 (VWVMMFVMLLIVSAVAVFV) traverse the membrane as a helical segment. Residues 577 to 603 (FEYFSPVGYNRCLADGREPGGPSFTIG) lie on the Cytoplasmic side of the membrane. Residues 604–623 (KAIWLLWGLVFNNSVPVQNP) constitute an intramembrane region (discontinuously helical). The interval 604–623 (KAIWLLWGLVFNNSVPVQNP) is pore-forming. Topologically, residues 624–630 (KGTTSKI) are cytoplasmic. Residues 631-646 (MVSVWAFFAVIFLASY) form a helical membrane-spanning segment. Residues 647–817 (TANLAAFMIQ…VMSSQLDIDN (171 aa)) are Extracellular-facing. Asn688 is a glycosylation site (N-linked (GlcNAc...) asparagine). L-glutamate-binding positions include 690–691 (ST) and Asp732. Cys746 and Cys801 are joined by a disulfide. Residues 818 to 837 (MAGVFYMLGAAMALSLITFI) traverse the membrane as a helical segment. The Cytoplasmic segment spans residues 838 to 1485 (CEHLFYWQFR…EKLSSIESDV (648 aa)). Ser882, Ser886, Ser917, and Ser920 each carry phosphoserine. Residues Tyr962 and Tyr1039 each carry the phosphotyrosine modification. Residues Ser1058, Ser1061, and Ser1064 each carry the phosphoserine modification. Residues 1074–1097 (EGNAAKRRKQQYKDSLKKRPASAK) are disordered. Phosphotyrosine occurs at positions 1109 and 1133. A Phosphoserine modification is found at Ser1143. Phosphotyrosine is present on Tyr1155. The interval 1162–1194 (FKRDSVSGGGPCTNRSHLKHGAGDKHGVVSGVP) is disordered. 2 positions are modified to phosphoserine: Ser1255 and Ser1259. Residues 1269–1278 (PVAVPSNAPS) are compositionally biased toward low complexity. Positions 1269–1302 (PVAVPSNAPSTKYPQSPTNSKAQKKTRNKLRRQH) are disordered. Over residues 1280-1289 (KYPQSPTNSK) the composition is skewed to polar residues. Positions 1290–1301 (AQKKTRNKLRRQ) are enriched in basic residues. An interaction with DAPK1 region spans residues 1292–1304 (KKTRNKLRRQHSY). Ser1303 is modified (phosphoserine; by DAPK1). At Tyr1475 the chain carries Phosphotyrosine. Residues 1483-1485 (SDV) carry the PDZ-binding motif.

The protein belongs to the glutamate-gated ion channel (TC 1.A.10.1) family. NR2B/GRIN2B subfamily. In terms of assembly, heterotetramer. Forms heterotetrameric channels composed of two GluN1/zeta subunits (GRIN1), and two identical GluN2/epsilon subunits (GRIN2A, GRIN2B, GRIN2C or GRIN2D) or GluN3 subunits (GRIN3A or GRIN3B) (in vitro). Can also form heterotetrameric channels that contain at least two GluN1 subunits and at least two different GluN2 subunits (or a combination of one GluN2 and one GluN3 subunits) (in vitro). In vivo, the subunit composition may depend on the expression levels of the different subunits. Found in a complex with GRIN1, GRIN3A and PPP2CB. Found in a complex with GRIN1 and GRIN3B. Interacts with MAGI3. Interacts with HIP1 and Neto1. Interacts with PDZ domains of PATJ, DLG3 and DLG4. Interacts with DAPK1. Found in a complex with GRIN1 and PRR7. Interacts with PRR7. Interacts with CAMK2A. Interacts with ARC; preventing ARC oligomerization. Interacts with TMEM25. Interacts (via the extreme C-terminus) with FRMPD2 (via the second PDZ domain); the interaction is direct and is likely to promote NMDAR-mediated neural signal transmission. Interacts with FAM81A; the interaction facilitates condensate formation via liquid-liquid phase separation. In terms of processing, phosphorylated on tyrosine residues. Phosphorylation at Ser-1303 by DAPK1 enhances synaptic NMDA receptor channel activity.

The protein resides in the cell membrane. It is found in the postsynaptic cell membrane. It localises to the cell projection. Its subcellular location is the dendrite. The protein localises to the late endosome. The protein resides in the lysosome. It is found in the cytoplasm. It localises to the cytoskeleton. It carries out the reaction Ca(2+)(in) = Ca(2+)(out). It catalyses the reaction Na(+)(in) = Na(+)(out). The enzyme catalyses K(+)(in) = K(+)(out). Its function is as follows. Component of N-methyl-D-aspartate (NMDA) receptors (NMDARs) that function as heterotetrameric, ligand-gated cation channels with high calcium permeability and voltage-dependent block by Mg(2+). Participates in synaptic plasticity for learning and memory formation by contributing to the long-term depression (LTD) of hippocampus membrane currents. Channel activation requires binding of the neurotransmitter L-glutamate to the GluN2 subunit, glycine or D-serine binding to the GluN1 subunit, plus membrane depolarization to eliminate channel inhibition by Mg(2+). NMDARs mediate simultaneously the potasium efflux and the influx of calcium and sodium. Each GluN2 subunit confers differential attributes to channel properties, including activation, deactivation and desensitization kinetics, pH sensitivity, Ca2(+) permeability, and binding to allosteric modulators. In concert with DAPK1 at extrasynaptic sites, acts as a central mediator for stroke damage. Its phosphorylation at Ser-1303 by DAPK1 enhances synaptic NMDA receptor channel activity inducing injurious Ca2+ influx through them, resulting in an irreversible neuronal death. This chain is Glutamate receptor ionotropic, NMDA 2B, found in Canis lupus familiaris (Dog).